The primary structure comprises 639 residues: tRNA 5-methylaminomethyl-2-thiouridine biosynthesis bifunctional protein MnmC (639 aa).

Residues 1 to 228 form a tRNA (mnm(5)s(2)U34)-methyltransferase region; the sequence is MSEPIEWLED…KRDNLQATYA (228 aa). The segment at 254 to 639 is FAD-dependent cmnm(5)s(2)U34 oxidoreductase; the sequence is VGAGLAGAAV…SERWLGYEPQ (386 aa).

It in the N-terminal section; belongs to the methyltransferase superfamily. tRNA (mnm(5)s(2)U34)-methyltransferase family. This sequence in the C-terminal section; belongs to the DAO family. It depends on FAD as a cofactor.

Its subcellular location is the cytoplasm. It carries out the reaction 5-aminomethyl-2-thiouridine(34) in tRNA + S-adenosyl-L-methionine = 5-methylaminomethyl-2-thiouridine(34) in tRNA + S-adenosyl-L-homocysteine + H(+). Catalyzes the last two steps in the biosynthesis of 5-methylaminomethyl-2-thiouridine (mnm(5)s(2)U) at the wobble position (U34) in tRNA. Catalyzes the FAD-dependent demodification of cmnm(5)s(2)U34 to nm(5)s(2)U34, followed by the transfer of a methyl group from S-adenosyl-L-methionine to nm(5)s(2)U34, to form mnm(5)s(2)U34. The protein is tRNA 5-methylaminomethyl-2-thiouridine biosynthesis bifunctional protein MnmC of Acidovorax sp. (strain JS42).